The chain runs to 93 residues: MADITDIKSIMYTEKSLALQEEGVIVVQTTPRMTKNGLKEVFKEFFGITPLRVNSMRVNGKVKRFKGIEGKRPDLKKFYVKLPEDAKIESLAV.

This sequence belongs to the universal ribosomal protein uL23 family. Part of the 50S ribosomal subunit. Contacts protein L29, and trigger factor when it is bound to the ribosome.

In terms of biological role, one of the early assembly proteins it binds 23S rRNA. One of the proteins that surrounds the polypeptide exit tunnel on the outside of the ribosome. Forms the main docking site for trigger factor binding to the ribosome. The polypeptide is Large ribosomal subunit protein uL23 (Sulfurovum sp. (strain NBC37-1)).